Reading from the N-terminus, the 1022-residue chain is Protein translocase subunit SECA1, chloroplastic (1022 aa).

Residues 1–72 (MVSPLCDSQL…SRKRSTSVNA (72 aa)) constitute a chloroplast transit peptide. The residue at position 73 (Ser-73) is an N-acetylserine. Position 176 to 183 (176 to 183 (MRTGEGKT)) interacts with ATP. Positions 985 to 1022 (KDEEKKSQNGKPSKQVDNASEKPKQVGVTDEPSSIASA) are disordered. Polar residues predominate over residues 993–1002 (NGKPSKQVDN).

It belongs to the SecA family. As to quaternary structure, part of the Sec protein translocation apparatus. Interacts probably with SCY1. Expressed in green tissues, including cotyledons, rosette and cauline leaves, and sepals. Also detected at the base and the tip of the trichome.

Its subcellular location is the plastid. It localises to the chloroplast stroma. It is found in the chloroplast thylakoid membrane. The catalysed reaction is ATP + H2O + chloroplast-proteinSide 1 = ADP + phosphate + chloroplast-proteinSide 2.. Has a central role in coupling the hydrolysis of ATP to the transfer of proteins across the thylakoid membrane. Involved in photosynthetic acclimation and required for chloroplast biogenesis. The polypeptide is Protein translocase subunit SECA1, chloroplastic (Arabidopsis thaliana (Mouse-ear cress)).